Consider the following 221-residue polypeptide: Iron-sulfur cluster repair protein YtfE (221 aa).

Belongs to the RIC family. YtfE subfamily. As to quaternary structure, homodimer.

It localises to the cytoplasm. Di-iron-containing protein involved in the repair of iron-sulfur clusters damaged by oxidative and nitrosative stress conditions. In Cronobacter sakazakii (strain ATCC BAA-894) (Enterobacter sakazakii), this protein is Iron-sulfur cluster repair protein YtfE.